The sequence spans 210 residues: Aminoglycoside 2'-N-acetyltransferase (210 aa).

The region spanning 21–189 is the N-acetyltransferase domain; it reads IHTSDLDQET…SLFVLPVDLP (169 aa). Residues Asp54 and 106-107 contribute to the substrate site; that span reads EA. Residues 108–110 and 115–120 contribute to the CoA site; these read VAV and RGDGLG. Substrate is bound by residues Ser141 and 176–177; that span reads ED.

The protein belongs to the AAC(2')-I acetyltransferase family. In terms of assembly, homodimer.

Catalyzes the coenzyme A-dependent acetylation of the 2' hydroxyl or amino group of a broad spectrum of aminoglycosides. It confers resistance to aminoglycosides. The chain is Aminoglycoside 2'-N-acetyltransferase (aac) from Mycolicibacterium smegmatis (strain ATCC 700084 / mc(2)155) (Mycobacterium smegmatis).